We begin with the raw amino-acid sequence, 376 residues long: Lipoyl synthase 1, chloroplastic (376 aa).

Residues 1–13 (MIEQSLSKPSFSL) are compositionally biased toward polar residues. 2 disordered regions span residues 1 to 25 (MIEQ…KSKS) and 47 to 75 (IDAK…DPNV). The N-terminal 35 residues, 1–35 (MIEQSLSKPSFSLSIPIPQPPKSKSSFLCSYSKIR), are a transit peptide targeting the chloroplast. [4Fe-4S] cluster is bound by residues Cys-107, Cys-112, Cys-118, Cys-138, Cys-142, Cys-145, and Ser-353. Positions 121–342 (GGGDGIATAT…KEYGESIGFR (222 aa)) constitute a Radical SAM core domain.

It belongs to the radical SAM superfamily. Lipoyl synthase family. It depends on [4Fe-4S] cluster as a cofactor.

Its subcellular location is the plastid. The protein localises to the chloroplast. It catalyses the reaction [[Fe-S] cluster scaffold protein carrying a second [4Fe-4S](2+) cluster] + N(6)-octanoyl-L-lysyl-[protein] + 2 oxidized [2Fe-2S]-[ferredoxin] + 2 S-adenosyl-L-methionine + 4 H(+) = [[Fe-S] cluster scaffold protein] + N(6)-[(R)-dihydrolipoyl]-L-lysyl-[protein] + 4 Fe(3+) + 2 hydrogen sulfide + 2 5'-deoxyadenosine + 2 L-methionine + 2 reduced [2Fe-2S]-[ferredoxin]. The protein operates within protein modification; protein lipoylation via endogenous pathway; protein N(6)-(lipoyl)lysine from octanoyl-[acyl-carrier-protein]: step 2/2. Catalyzes the radical-mediated insertion of two sulfur atoms into the C-6 and C-8 positions of the octanoyl moiety bound to the lipoyl domains of lipoate-dependent enzymes, thereby converting the octanoylated domains into lipoylated derivatives. The polypeptide is Lipoyl synthase 1, chloroplastic (Populus trichocarpa (Western balsam poplar)).